A 460-amino-acid polypeptide reads, in one-letter code: Phosphoglucomutase (460 aa).

S103 (phosphoserine intermediate) is an active-site residue. Position 103 (S103) interacts with Mg(2+). Substrate is bound by residues 103-104 (SH) and K113. Residues D239, D241, and D243 each coordinate Mg(2+). Residues 243–244 (DR), T303, and 322–324 (EMS) contribute to the substrate site.

The protein belongs to the phosphohexose mutase family. It depends on Mg(2+) as a cofactor.

It is found in the cytoplasm. The catalysed reaction is alpha-D-glucose 1-phosphate = alpha-D-glucose 6-phosphate. Its function is as follows. This enzyme participates in both the breakdown and synthesis of glucose. The chain is Phosphoglucomutase (pgm) from Neisseria meningitidis serogroup A / serotype 4A (strain DSM 15465 / Z2491).